A 265-amino-acid chain; its full sequence is tRNA pseudouridine synthase A (265 aa).

D52 functions as the Nucleophile in the catalytic mechanism. Residue Y110 participates in substrate binding. The disordered stretch occupies residues 244–265 (FYRDGPPARTPGGTTDAEEDEG).

The protein belongs to the tRNA pseudouridine synthase TruA family. In terms of assembly, homodimer.

The catalysed reaction is uridine(38/39/40) in tRNA = pseudouridine(38/39/40) in tRNA. Formation of pseudouridine at positions 38, 39 and 40 in the anticodon stem and loop of transfer RNAs. The sequence is that of tRNA pseudouridine synthase A from Myxococcus xanthus.